The sequence spans 1240 residues: DNA excision repair protein ERCC-6-like (1240 aa).

Ser14 carries the phosphoserine modification. A TPR 1 repeat occupies 21 to 54 (YLRYVQEAKEAAKNGDLEESLKLFNLAKDIFPTK). Positions 110–278 (SLYKDGRKGG…WSLFDFACQG (169 aa)) constitute a Helicase ATP-binding domain. 123-130 (DDMGLGKT) is an ATP binding site. A DEAH box motif is present at residues 229-232 (DEAH). The region spanning 467–631 (FLMSLLERLQ…FTKQELKELF (165 aa)) is the Helicase C-terminal domain. The tract at residues 736–760 (FPSQQKKKGTEFNKPQPQPSRLLTK) is disordered. Over residues 748 to 760 (NKPQPQPSRLLTK) the composition is skewed to polar residues. A phosphoserine mark is found at Ser755 and Ser773. The segment at 778–813 (DQSAESEPQEHSEVHDVTSLQGSHHFNSTSDAGTIA) is disordered. The segment covering 795–809 (TSLQGSHHFNSTSDA) has biased composition (polar residues). Ser821 is modified (phosphoserine). The interval 845-879 (QKKGLQASPGQEAPSENLGSFHYLPRESSKASLGP) is disordered. Phosphoserine is present on residues Ser966, Ser998, Ser1001, and Ser1021. The tract at residues 974–1085 (KEKSLQSPAA…EVNTSLHSRR (112 aa)) is disordered. A compositionally biased stretch (polar residues) spans 978-998 (LQSPAANSRAKSALTLSLDSS). Polar residues predominate over residues 1049-1065 (SVKQFDASTPQSGSNPS). At Thr1057 the chain carries Phosphothreonine. A phosphoserine mark is found at Ser1092 and Ser1112. Over residues 1104–1117 (MEERLDNSSEEESE) the composition is skewed to acidic residues. Positions 1104–1185 (MEERLDNSSE…MPDPPQDLAV (82 aa)) are disordered. Over residues 1135 to 1165 (EQPSGATLASGNKSSNLTMSEPTSPAPQSSP) the composition is skewed to polar residues. The residue at position 1172 (Ser1172) is a Phosphoserine. The stretch at 1191–1224 (YESLVARGKELKECGKIQEALNCLVKALDIKSAD) is one TPR 2 repeat.

This sequence belongs to the SNF2/RAD54 helicase family. In terms of assembly, interacts with PLK1, which phosphorylates it. Both proteins are mutually dependent on each other for correct subcellular localization. Interacts (via N-terminal TPR repeat) with BEND3 (via BEN domains 1 and 3); the interaction is direct. In terms of processing, phosphorylation by PLK1 prevents the association with chromosome arms and restricts its localization to the kinetochore-centromere region. In terms of tissue distribution, expressed mainly in the neural tube and heart of 10.5 dpc embryo. Significantly down-regulated after alcohol exposure in embryonic brain and heart, but not in embryonic kidney, liver, or lung.

The protein resides in the chromosome. It is found in the centromere. It localises to the kinetochore. The catalysed reaction is ATP + H2O = ADP + phosphate + H(+). Functionally, DNA helicase that acts as a tension sensor that associates with catenated DNA which is stretched under tension until it is resolved during anaphase. Functions as ATP-dependent DNA translocase. Can promote Holliday junction branch migration (in vitro). In Mus musculus (Mouse), this protein is DNA excision repair protein ERCC-6-like (Ercc6l).